Consider the following 336-residue polypeptide: Dihydroorotate dehydrogenase (quinone) (336 aa).

FMN is bound by residues 62-66 (AGLDK) and T86. A substrate-binding site is contributed by K66. 111 to 115 (NRMGF) provides a ligand contact to substrate. Residues N139 and N172 each contribute to the FMN site. N172 is a binding site for substrate. The active-site Nucleophile is S175. Substrate is bound at residue N177. 2 residues coordinate FMN: K217 and T245. 246-247 (NT) lines the substrate pocket. Residues G268, G297, and 318-319 (YS) each bind FMN.

It belongs to the dihydroorotate dehydrogenase family. Type 2 subfamily. As to quaternary structure, monomer. It depends on FMN as a cofactor.

It localises to the cell membrane. The catalysed reaction is (S)-dihydroorotate + a quinone = orotate + a quinol. Its pathway is pyrimidine metabolism; UMP biosynthesis via de novo pathway; orotate from (S)-dihydroorotate (quinone route): step 1/1. In terms of biological role, catalyzes the conversion of dihydroorotate to orotate with quinone as electron acceptor. The protein is Dihydroorotate dehydrogenase (quinone) of Vibrio vulnificus (strain YJ016).